The chain runs to 144 residues: Small ribosomal subunit protein uS12 (144 aa).

The tract at residues 1-55 (MPTINQLVRKGREDKVVKSKSPALQKGYNSFKKSQTNQSSPQKRGVCTRVGTMTP) is disordered. Residues 27–42 (GYNSFKKSQTNQSSPQ) show a composition bias toward polar residues. Asp102 is subject to 3-methylthioaspartic acid. Positions 119-144 (GVNNRKQGRSKYGTKRPKPGQAAAKK) are disordered. Residues 124 to 144 (KQGRSKYGTKRPKPGQAAAKK) are compositionally biased toward basic residues.

The protein belongs to the universal ribosomal protein uS12 family. As to quaternary structure, part of the 30S ribosomal subunit. Contacts proteins S8 and S17. May interact with IF1 in the 30S initiation complex.

Its function is as follows. With S4 and S5 plays an important role in translational accuracy. Interacts with and stabilizes bases of the 16S rRNA that are involved in tRNA selection in the A site and with the mRNA backbone. Located at the interface of the 30S and 50S subunits, it traverses the body of the 30S subunit contacting proteins on the other side and probably holding the rRNA structure together. The combined cluster of proteins S8, S12 and S17 appears to hold together the shoulder and platform of the 30S subunit. The chain is Small ribosomal subunit protein uS12 from Brevibacillus brevis (strain 47 / JCM 6285 / NBRC 100599).